The following is a 322-amino-acid chain: Probable uridine nucleosidase 2 (322 aa).

Active-site residues include Asp14 and His246.

Belongs to the IUNH family. As to quaternary structure, component of the NSH heterocomplex made of URH1/NSH1 and URH2/NSH2 which exhibits strong xanthosine nucleosidase activity. Interacts with URH1. In terms of tissue distribution, expressed in roots, seedlings and flowers.

Its subcellular location is the cytoplasm. The protein resides in the cytosol. It carries out the reaction uridine + H2O = D-ribose + uracil. The enzyme catalyses inosine + H2O = hypoxanthine + D-ribose. It catalyses the reaction xanthosine + H2O = D-ribose + xanthine. In terms of biological role, involved in pyrimidine breakdown, especially in response to dark stress. In the presence of URH1, exhibits efficient inosine and xanthosine hydrolytic activities. Support inosine breakdown especially during the late phase of senescence. The sequence is that of Probable uridine nucleosidase 2 from Arabidopsis thaliana (Mouse-ear cress).